The following is a 322-amino-acid chain: Pantothenate kinase (322 aa).

Residue 101–108 participates in ATP binding; the sequence is GSVAVGKS.

The protein belongs to the prokaryotic pantothenate kinase family.

The protein resides in the cytoplasm. The catalysed reaction is (R)-pantothenate + ATP = (R)-4'-phosphopantothenate + ADP + H(+). The protein operates within cofactor biosynthesis; coenzyme A biosynthesis; CoA from (R)-pantothenate: step 1/5. The chain is Pantothenate kinase from Psychromonas ingrahamii (strain DSM 17664 / CCUG 51855 / 37).